Here is a 564-residue protein sequence, read N- to C-terminus: Dihydroxy-acid dehydratase (564 aa).

D78 provides a ligand contact to Mg(2+). Residue C119 coordinates [2Fe-2S] cluster. D120 and K121 together coordinate Mg(2+). Position 121 is an N6-carboxylysine (K121). C192 lines the [2Fe-2S] cluster pocket. E451 serves as a coordination point for Mg(2+). S477 serves as the catalytic Proton acceptor.

It belongs to the IlvD/Edd family. In terms of assembly, homodimer. It depends on [2Fe-2S] cluster as a cofactor. Mg(2+) serves as cofactor.

It catalyses the reaction (2R)-2,3-dihydroxy-3-methylbutanoate = 3-methyl-2-oxobutanoate + H2O. It carries out the reaction (2R,3R)-2,3-dihydroxy-3-methylpentanoate = (S)-3-methyl-2-oxopentanoate + H2O. It participates in amino-acid biosynthesis; L-isoleucine biosynthesis; L-isoleucine from 2-oxobutanoate: step 3/4. The protein operates within amino-acid biosynthesis; L-valine biosynthesis; L-valine from pyruvate: step 3/4. Its function is as follows. Functions in the biosynthesis of branched-chain amino acids. Catalyzes the dehydration of (2R,3R)-2,3-dihydroxy-3-methylpentanoate (2,3-dihydroxy-3-methylvalerate) into 2-oxo-3-methylpentanoate (2-oxo-3-methylvalerate) and of (2R)-2,3-dihydroxy-3-methylbutanoate (2,3-dihydroxyisovalerate) into 2-oxo-3-methylbutanoate (2-oxoisovalerate), the penultimate precursor to L-isoleucine and L-valine, respectively. The polypeptide is Dihydroxy-acid dehydratase (Nitratiruptor sp. (strain SB155-2)).